A 620-amino-acid polypeptide reads, in one-letter code: EF-hand calcium-binding domain-containing protein 7 (620 aa).

Residues 1–24 (MANHSSLPSQKYAASERQEYQKPQ) are disordered. EF-hand domains are found at residues 98-133 (ATKNELLKAFRKIDTNNKGYILHNDLYEILTTKGEK) and 134-169 (MSQEEVNSVFRLAEVNSNGKLDYNKFCSTFFKTCEQ). Positions 176–234 (ERMDSNSKAKRQQFGSYIEKSPERSSSPKSSHGNLKLFDSETSTRKENKSSRPSSARSY) are disordered. Residues 213–225 (FDSETSTRKENKS) are compositionally biased toward basic and acidic residues. One can recognise an EF-hand 3 domain in the interval 394 to 429 (EFKSALSDMFDIIDLDGNGLLSLAEYNFFEMRTSGE). The Ca(2+) site is built by Asp-407, Asp-409, Asn-411, and Glu-418.

The protein resides in the cell projection. It localises to the cilium membrane. Plays a role in the ciliary Hedgehog (Hh) signaling. The protein is EF-hand calcium-binding domain-containing protein 7 (efcab7) of Xenopus laevis (African clawed frog).